Consider the following 274-residue polypeptide: Large ribosomal subunit protein uL2cy (274 aa).

2 disordered regions span residues 1-20 (MAIH…AVDS) and 224-274 (NPVD…RRSK).

The protein belongs to the universal ribosomal protein uL2 family. Part of the 50S ribosomal subunit.

It localises to the plastid. The protein localises to the chloroplast. The chain is Large ribosomal subunit protein uL2cy (rpl2-B) from Populus alba (White poplar).